The primary structure comprises 93 residues: UPF0223 protein gbs1030 (93 aa).

It belongs to the UPF0223 family.

The polypeptide is UPF0223 protein gbs1030 (Streptococcus agalactiae serotype III (strain NEM316)).